Consider the following 428-residue polypeptide: Probable RNase MJ4 (428 aa).

Zn(2+) is bound by residues H57, H59, D61, H62, H143, D165, and H397.

Belongs to the metallo-beta-lactamase superfamily. RNA-metabolizing metallo-beta-lactamase-like family. Zn(2+) is required as a cofactor.

Its function is as follows. Probably an RNase. The chain is Probable RNase MJ4 from Methanocaldococcus jannaschii (strain ATCC 43067 / DSM 2661 / JAL-1 / JCM 10045 / NBRC 100440) (Methanococcus jannaschii).